A 386-amino-acid chain; its full sequence is Probable zinc transporter zrg17 (386 aa).

A run of 6 helical transmembrane segments spans residues 102–122, 128–148, 163–183, 208–228, 243–263, and 268–288; these read ILFF…ILLT, IVEG…SFLV, MELL…MNLL, VHIH…FALL, FFHG…SLGY, and FLSH…GFSI.

It belongs to the cation diffusion facilitator (CDF) transporter (TC 2.A.4) family. SLC30A subfamily. In terms of assembly, interacts with cis4.

Its subcellular location is the cytoplasm. The protein resides in the nucleus membrane. Probable transporter involved in the regulation of zinc homeostasis. The chain is Probable zinc transporter zrg17 (zrg17) from Schizosaccharomyces pombe (strain 972 / ATCC 24843) (Fission yeast).